We begin with the raw amino-acid sequence, 820 residues long: Disintegrin and metalloproteinase domain-containing protein 29 (820 aa).

Positions 1 to 18 (MKMLLLLHCLGVFLSCSG) are cleaved as a signal peptide. A propeptide spanning residues 19–193 (HIQDEHPQYH…TQKQSSYVGW (175 aa)) is cleaved from the precursor. The Extracellular segment spans residues 194 to 674 (WIHFRIVEIV…GPPPKRKKKK (481 aa)). In terms of domain architecture, Peptidase M12B spans 198-390 (RIVEIVVVID…RTKCLLETVH (193 aa)). N-linked (GlcNAc...) asparagine glycans are attached at residues asparagine 217 and asparagine 320. Cystine bridges form between cysteine 307–cysteine 384, cysteine 347–cysteine 369, and cysteine 349–cysteine 354. N-linked (GlcNAc...) asparagine glycans are attached at residues asparagine 368, asparagine 428, asparagine 469, asparagine 538, asparagine 545, asparagine 558, and asparagine 564. In terms of domain architecture, Disintegrin spans 397–483 (VKRCGNGVVE…KCPDDFYVED (87 aa)). A disulfide bond links cysteine 455 and cysteine 475. Disulfide bonds link cysteine 625–cysteine 636, cysteine 630–cysteine 642, and cysteine 644–cysteine 653. One can recognise an EGF-like domain in the interval 625 to 654 (CSPAFCNKRGICNNKHHCHCNYLWDPPNCL). Residues 675–695 (KFCYLCILLLIVLFILLCCLY) form a helical membrane-spanning segment. At 696-820 (RLCKKSKPIK…SQSQPPVTPS (125 aa)) the chain is on the cytoplasmic side. Residues 706-820 (KQQDVQTPSA…SQSQPPVTPS (115 aa)) are disordered. Over residues 715-727 (AKEEEKIQRRPHE) the composition is skewed to basic and acidic residues. The segment covering 738–820 (PSQSQPPVTP…SQSQPPVTPS (83 aa)) has biased composition (low complexity). Tandem repeats lie at residues 739–747 (SQSQPPVTP), 748–756 (SQSHPQVMP), 757–765 (SQSQPPVTP), 766–774 (SQSQPRVMP), 775–783 (SQSQPPVMP), 784–792 (SQSHPQLTP), 793–801 (SQSQPPVTP), 802–810 (SQRQPQLMP), and 811–819 (SQSQPPVTP). The 9 X 9 AA approximate repeats stretch occupies residues 739-819 (SQSQPPVTPS…PSQSQPPVTP (81 aa)).

Expressed specifically in testes.

It is found in the membrane. Its function is as follows. May be involved in spermatogenesis and fertilization. Seems to be a non catalytic metalloprotease-like protein. The sequence is that of Disintegrin and metalloproteinase domain-containing protein 29 (ADAM29) from Homo sapiens (Human).